A 328-amino-acid polypeptide reads, in one-letter code: Acetaldehyde dehydrogenase 3 (328 aa).

17 to 20 serves as a coordination point for NAD(+); it reads SGNI. Cys135 (acyl-thioester intermediate) is an active-site residue. Residues 166-174 and Asn298 each bind NAD(+); that span reads SAGPGTRAN.

It belongs to the acetaldehyde dehydrogenase family.

The catalysed reaction is acetaldehyde + NAD(+) + CoA = acetyl-CoA + NADH + H(+). The chain is Acetaldehyde dehydrogenase 3 from Nocardia farcinica (strain IFM 10152).